Reading from the N-terminus, the 714-residue chain is MALTAALKAQIAAWYKALQDQIPDFIPRAPQRQMIADVARTLAGEEGRHLAIEAPTGVGKTLSYLIPGIAIAREEQKTLVVSTANVALQDQIFSKDLPLLRKIIPDLRFTAAFGRGRYVCPRNLAALASSEPTQQDLLAFLDDELTPNNQEEQKRCARLKGDLDGYKWDGLRDHTDIAIDDDLWRRLSTDKASCLNRNCHYYRECPFFVARREIQEAEVVVANHALVMAAMESEAVLPEPKHLLLVLDEGHHLPDVARDALEMSAEITASWYRLQLDLFSKLVATSMEQFRPKTTPPLANPERLNAHCEEVYELIASLNAILNLYMPAAQEAEHRFAMGELPDEVMEICQRLAKLTETLRGLAESFLNDLSEKTGSHDIVRLHRVILQMNWALGMFEAQSKLWRLASMAQSSGAPVSKWATREIREGQLHVWFHCVGIRVSDQLERLLWRSVPHIIVTSATLRSLNSFSRLQEMSGLKEKAGDRFVALDSPFNHVEQGKLVIPQMRYEPTIDNEEQHIAEMAAYFREQLESKKHHGMLVLFASGRAMQRFLEHVADVRLLLLVQGDQPRYRLVELHRKRVESGERSVLVGLQSFAEGLDLKGELLTQVHIHKIAFPPIDSPVVITEGEWLKSLNRYPFEVQSLPSASFNLIQQVGRLIRSHACRGEVVIYDKRLLTKNYGQRLLNALPVFPIEQPAVPDVIVKPKAKPARRRRR.

Residues Ala17–Thr294 enclose the Helicase ATP-binding domain. ATP is bound at residue Ala54 to Thr61. [4Fe-4S] cluster-binding residues include Cys120, Cys194, Cys199, and Cys205. A DEAH box motif is present at residues Asp248–His251. The Helicase C-terminal domain occupies His517–Pro698.

Belongs to the helicase family. DinG subfamily. Type 1 sub-subfamily. [4Fe-4S] cluster serves as cofactor.

It catalyses the reaction Couples ATP hydrolysis with the unwinding of duplex DNA at the replication fork by translocating in the 5'-3' direction. This creates two antiparallel DNA single strands (ssDNA). The leading ssDNA polymer is the template for DNA polymerase III holoenzyme which synthesizes a continuous strand.. The catalysed reaction is ATP + H2O = ADP + phosphate + H(+). Its function is as follows. DNA-dependent ATPase and 5'-3' DNA helicase. Unwinds D-loops, R-loops, forked DNA and G-quadruplex DNA. The chain is ATP-dependent DNA helicase DinG from Salmonella choleraesuis (strain SC-B67).